Reading from the N-terminus, the 211-residue chain is MNSNVENLPPHIIRQVYKEVSTLTSDPPEGIKIIPNEEDITDVQVNIEGPEGTPYAGGIFRMKLILGKDFPAAPPKGYFLTKIFHPNVSTNGEICVNVLKKDWKAELGIRHVLLTIKCLLIHPNPESALNEEAGRLLLENYEEYASRARLMTEIHAQGSSLRGKDPTDPCSSASATLVSGDGPMAKKHAGDRDKKLAAKKKTDKKRALRRL.

Residues 11–157 (HIIRQVYKEV…ARLMTEIHAQ (147 aa)) form the UBC core domain. Cys95 (glycyl thioester intermediate) is an active-site residue. The tract at residues 157 to 211 (QGSSLRGKDPTDPCSSASATLVSGDGPMAKKHAGDRDKKLAAKKKTDKKRALRRL) is disordered. The span at 197-211 (AAKKKTDKKRALRRL) shows a compositional bias: basic residues.

It belongs to the ubiquitin-conjugating enzyme family.

The enzyme catalyses S-ubiquitinyl-[E1 ubiquitin-activating enzyme]-L-cysteine + [E2 ubiquitin-conjugating enzyme]-L-cysteine = [E1 ubiquitin-activating enzyme]-L-cysteine + S-ubiquitinyl-[E2 ubiquitin-conjugating enzyme]-L-cysteine.. It participates in protein modification; protein ubiquitination. Catalyzes the covalent attachment of ubiquitin to other proteins. Acts as an essential factor of the anaphase promoting complex/cyclosome (APC/C), a cell cycle-regulated ubiquitin ligase that controls progression through mitosis. Acts by specifically elongating 'Lys-11'-linked polyubiquitin chains initiated by the E2 enzyme ube2c/ubch10 on APC/C substrates, enhancing the degradation of APC/C substrates by the proteasome and promoting mitotic exit. In Xenopus tropicalis (Western clawed frog), this protein is Ubiquitin-conjugating enzyme E2 S (ube2s).